A 546-amino-acid chain; its full sequence is Membrane protein insertase YidC (546 aa).

The helical transmembrane segment at 8 to 28 (ILLATVLSVGILILWQVIFPT) threads the bilayer. Residues 31-70 (APPKPAHPPAAEVAKPAAPASPAPGAAAPAVPAPPPDAPE) are disordered. The segment covering 39–60 (PAAEVAKPAAPASPAPGAAAPA) has biased composition (low complexity). The next 5 membrane-spanning stretches (helical) occupy residues 326–346 (IDYG…LYVM), 356–376 (WGVA…PLTY), 422–442 (LGGC…YAAL), 459–479 (LTAH…SFVM), and 498–518 (FFPG…TLYI).

This sequence belongs to the OXA1/ALB3/YidC family. Type 1 subfamily. As to quaternary structure, interacts with the Sec translocase complex via SecD. Specifically interacts with transmembrane segments of nascent integral membrane proteins during membrane integration.

It is found in the cell inner membrane. Required for the insertion and/or proper folding and/or complex formation of integral membrane proteins into the membrane. Involved in integration of membrane proteins that insert both dependently and independently of the Sec translocase complex, as well as at least some lipoproteins. Aids folding of multispanning membrane proteins. This is Membrane protein insertase YidC from Anaeromyxobacter dehalogenans (strain 2CP-1 / ATCC BAA-258).